The following is a 190-amino-acid chain: dCTP deaminase, dUMP-forming (190 aa).

Residues 101–106 (KSSLGR), D119, 127–129 (TLE), Q148, Y162, K170, and Q174 each bind dCTP. The Proton donor/acceptor role is filled by E129. Residues 160–190 (HPYGSSRAGSKYQGQRGPTPSRSCQNFIRST) are disordered. Over residues 171–190 (YQGQRGPTPSRSCQNFIRST) the composition is skewed to polar residues.

Belongs to the dCTP deaminase family. Homotrimer.

The catalysed reaction is dCTP + 2 H2O = dUMP + NH4(+) + diphosphate. The protein operates within pyrimidine metabolism; dUMP biosynthesis; dUMP from dCTP: step 1/1. Bifunctional enzyme that catalyzes both the deamination of dCTP to dUTP and the hydrolysis of dUTP to dUMP without releasing the toxic dUTP intermediate. In Mycobacterium bovis (strain ATCC BAA-935 / AF2122/97), this protein is dCTP deaminase, dUMP-forming.